A 346-amino-acid chain; its full sequence is N-acetyl-gamma-glutamyl-phosphate reductase (346 aa).

Cys-150 is an active-site residue.

Belongs to the NAGSA dehydrogenase family. Type 1 subfamily.

The protein localises to the cytoplasm. It catalyses the reaction N-acetyl-L-glutamate 5-semialdehyde + phosphate + NADP(+) = N-acetyl-L-glutamyl 5-phosphate + NADPH + H(+). The protein operates within amino-acid biosynthesis; L-arginine biosynthesis; N(2)-acetyl-L-ornithine from L-glutamate: step 3/4. Catalyzes the NADPH-dependent reduction of N-acetyl-5-glutamyl phosphate to yield N-acetyl-L-glutamate 5-semialdehyde. This chain is N-acetyl-gamma-glutamyl-phosphate reductase, found in Acetivibrio thermocellus (strain ATCC 27405 / DSM 1237 / JCM 9322 / NBRC 103400 / NCIMB 10682 / NRRL B-4536 / VPI 7372) (Clostridium thermocellum).